A 238-amino-acid chain; its full sequence is Purine nucleoside phosphorylase DeoD-type (238 aa).

His-4 is a binding site for a purine D-ribonucleoside. Phosphate-binding positions include Gly-20, Arg-24, Arg-43, and 87–90 (RVGS). A purine D-ribonucleoside contacts are provided by residues 179–181 (EME) and 203–204 (SD). Asp-204 serves as the catalytic Proton donor.

The protein belongs to the PNP/UDP phosphorylase family. Homohexamer; trimer of homodimers.

It carries out the reaction a purine D-ribonucleoside + phosphate = a purine nucleobase + alpha-D-ribose 1-phosphate. The enzyme catalyses a purine 2'-deoxy-D-ribonucleoside + phosphate = a purine nucleobase + 2-deoxy-alpha-D-ribose 1-phosphate. Functionally, catalyzes the reversible phosphorolytic breakdown of the N-glycosidic bond in the beta-(deoxy)ribonucleoside molecules, with the formation of the corresponding free purine bases and pentose-1-phosphate. The polypeptide is Purine nucleoside phosphorylase DeoD-type (Haemophilus influenzae (strain PittGG)).